A 4171-amino-acid chain; its full sequence is Cytoplasmic dynein 2 heavy chain 1 (4171 aa).

Residues 1–1598 (MSSDSKDQRK…VLRQVSSEFE (1598 aa)) form a stem region. 115-122 (GKELTEGN) serves as a coordination point for ATP. Coiled coils occupy residues 164–203 (ANDY…CDEL), 629–693 (KQLE…KEEE), 829–861 (DLEE…AERL), 927–1048 (EIAE…KEKR), and 1354–1383 (SRQS…LEQK). 4 AAA regions span residues 1599-1823 (YTYE…VLGG), 1883-2100 (EPLG…VRSH), 2184-2432 (VTKE…WVVS), and 2527-2767 (RFAF…PIKY). ATP contacts are provided by residues 1637 to 1644 (GPAGTGKT), 1921 to 1928 (GAAGSGKS), 2226 to 2233 (GTTGCGKQ), and 2565 to 2572 (GRPGFGRR). A stalk region spans residues 2776-3064 (QLLGYKRLTL…VDLDREQDTI (289 aa)). Coiled-coil stretches lie at residues 2790–2877 (ERLK…KEVQ), 2999–3059 (EKIA…DLDR), and 3308–3336 (ELEE…LLLQ). AAA regions lie at residues 3140–3367 (ASLE…IITK) and 3575–3784 (LMDF…FVEQ).

This sequence belongs to the dynein heavy chain family. As to quaternary structure, the cytoplasmic dynein complex 2 is probably composed by a heavy chain che-3 homodimer and a number of light intermediate chains.

It is found in the cell projection. It localises to the cilium membrane. The protein localises to the cytoplasm. The protein resides in the cytoskeleton. Functionally, functions as a motor for intraflagellar retrograde transport in chemosensory neurons. Functions in cilia biogenesis. In Caenorhabditis elegans, this protein is Cytoplasmic dynein 2 heavy chain 1.